Consider the following 187-residue polypeptide: Peptidyl-tRNA hydrolase (187 aa).

Residue Tyr-18 coordinates tRNA. His-23 serves as the catalytic Proton acceptor. Residues Phe-65, Asn-67, and Asn-113 each contribute to the tRNA site.

The protein belongs to the PTH family. Monomer.

It localises to the cytoplasm. It catalyses the reaction an N-acyl-L-alpha-aminoacyl-tRNA + H2O = an N-acyl-L-amino acid + a tRNA + H(+). Hydrolyzes ribosome-free peptidyl-tRNAs (with 1 or more amino acids incorporated), which drop off the ribosome during protein synthesis, or as a result of ribosome stalling. In terms of biological role, catalyzes the release of premature peptidyl moieties from peptidyl-tRNA molecules trapped in stalled 50S ribosomal subunits, and thus maintains levels of free tRNAs and 50S ribosomes. The protein is Peptidyl-tRNA hydrolase of Coxiella burnetii (strain RSA 331 / Henzerling II).